The following is a 465-amino-acid chain: Keratin, type I cytoskeletal 13 (465 aa).

Polar residues predominate over residues methionine 1–lysine 28. The segment at methionine 1–serine 47 is disordered. A head region spans residues methionine 1 to threonine 98. Positions serine 99–tryptophan 135 are coil 1A. The region spanning glycine 100–phenylalanine 412 is the IF rod domain. The segment at tyrosine 136–isoleucine 154 is linker 1. The tract at residues isoleucine 155 to leucine 246 is coil 1B. The linker 12 stretch occupies residues arginine 247–lysine 269. Residues leucine 270–aspartate 408 are coil 2. The segment at glutamate 409–isoleucine 465 is tail.

The protein belongs to the intermediate filament family. In terms of assembly, heterotetramer of two type I and two type II keratins. Expressed in skin.

Functionally, type 1 keratin. May maintain oral mucosal cell homeostasis and tissue organization in response to mechanical stress. The chain is Keratin, type I cytoskeletal 13 (KRT13) from Protopterus aethiopicus (Marbled lungfish).